The sequence spans 399 residues: Phosphoglycerate kinase (399 aa).

Substrate-binding positions include 24-26 (DLN), Arg-41, 64-67 (HLGR), Arg-123, and Arg-160. Residues Lys-210, Gly-298, Glu-329, and 355-358 (GGDS) each bind ATP.

This sequence belongs to the phosphoglycerate kinase family. As to quaternary structure, monomer.

The protein resides in the cytoplasm. It carries out the reaction (2R)-3-phosphoglycerate + ATP = (2R)-3-phospho-glyceroyl phosphate + ADP. Its pathway is carbohydrate degradation; glycolysis; pyruvate from D-glyceraldehyde 3-phosphate: step 2/5. In Salinispora arenicola (strain CNS-205), this protein is Phosphoglycerate kinase.